Reading from the N-terminus, the 333-residue chain is DNA-directed RNA polymerase subunit alpha (333 aa).

The tract at residues 1–246 is alpha N-terminal domain (alpha-NTD); it reads MKKMVQIKYK…AHLQVIGDVK (246 aa). The interval 262–333 is alpha C-terminal domain (alpha-CTD); that stretch reads VEPSIHSVDI…YNVTLNRGEK (72 aa).

This sequence belongs to the RNA polymerase alpha chain family. In terms of assembly, homodimer. The RNAP catalytic core consists of 2 alpha, 1 beta, 1 beta' and 1 omega subunit. When a sigma factor is associated with the core the holoenzyme is formed, which can initiate transcription.

It carries out the reaction RNA(n) + a ribonucleoside 5'-triphosphate = RNA(n+1) + diphosphate. DNA-dependent RNA polymerase catalyzes the transcription of DNA into RNA using the four ribonucleoside triphosphates as substrates. The protein is DNA-directed RNA polymerase subunit alpha of Mycoplasmopsis pulmonis (strain UAB CTIP) (Mycoplasma pulmonis).